A 2392-amino-acid polypeptide reads, in one-letter code: Protein Ycf2 (2392 aa).

ATP is bound at residue G1658–S1665.

The protein belongs to the Ycf2 family.

It is found in the plastid. It localises to the chloroplast stroma. In terms of biological role, probable ATPase of unknown function. Its presence in a non-photosynthetic plant (Epifagus virginiana) and experiments in tobacco indicate that it has an essential function which is probably not related to photosynthesis. The protein is Protein Ycf2 of Anthoceros angustus (Hornwort).